The following is a 118-amino-acid chain: Large ribosomal subunit protein bL20 (118 aa).

This sequence belongs to the bacterial ribosomal protein bL20 family.

In terms of biological role, binds directly to 23S ribosomal RNA and is necessary for the in vitro assembly process of the 50S ribosomal subunit. It is not involved in the protein synthesizing functions of that subunit. This Ralstonia pickettii (strain 12J) protein is Large ribosomal subunit protein bL20.